Reading from the N-terminus, the 242-residue chain is 3-deoxy-manno-octulosonate cytidylyltransferase (242 aa).

It belongs to the KdsB family.

The protein resides in the cytoplasm. The catalysed reaction is 3-deoxy-alpha-D-manno-oct-2-ulosonate + CTP = CMP-3-deoxy-beta-D-manno-octulosonate + diphosphate. It participates in nucleotide-sugar biosynthesis; CMP-3-deoxy-D-manno-octulosonate biosynthesis; CMP-3-deoxy-D-manno-octulosonate from 3-deoxy-D-manno-octulosonate and CTP: step 1/1. Its pathway is bacterial outer membrane biogenesis; lipopolysaccharide biosynthesis. Functionally, activates KDO (a required 8-carbon sugar) for incorporation into bacterial lipopolysaccharide in Gram-negative bacteria. The sequence is that of 3-deoxy-manno-octulosonate cytidylyltransferase from Mesorhizobium japonicum (strain LMG 29417 / CECT 9101 / MAFF 303099) (Mesorhizobium loti (strain MAFF 303099)).